A 346-amino-acid polypeptide reads, in one-letter code: High mobility group protein 20A (346 aa).

Composition is skewed to polar residues over residues 1-10 (MESLMASSTL) and 55-65 (SQGQLLQSEAS). Disordered regions lie at residues 1–112 (MESL…YVRF) and 178–210 (FSRK…TEVK). A compositionally biased stretch (basic and acidic residues) spans 71–81 (NEQRPEDEQRS). Basic residues predominate over residues 82-95 (KRGGWSKGRKRKKP). The HMG box DNA-binding region spans 102–170 (PKSPLTGYVR…RYMKELEQYQ (69 aa)). At Ser104 the chain carries Phosphoserine. A compositionally biased stretch (basic and acidic residues) spans 181–210 (KTQDRQKGKSHRQDAARQATHDHEKETEVK). A coiled-coil region spans residues 228–272 (SKAREAELRQLRKSNMEFEERNAALQKHVESMRTAVEKLEVDVIQ).

In terms of assembly, interacts with DTNB. As to expression, expressed in brain. Detected in mature neurons.

The protein resides in the nucleus. In terms of biological role, plays a role in neuronal differentiation as chromatin-associated protein. Acts as inhibitor of HMG20B. Overcomes the repressive effects of the neuronal silencer REST and induces the activation of neuronal-specific genes. Involved in the recruitment of the histone methyltransferase KMT2A/MLL1 and consequent increased methylation of histone H3 lysine 4. This chain is High mobility group protein 20A (Hmg20a), found in Mus musculus (Mouse).